The primary structure comprises 487 residues: UDP-N-acetylmuramate--L-alanine ligase (487 aa).

G129–T135 lines the ATP pocket.

Belongs to the MurCDEF family.

The protein localises to the cytoplasm. It catalyses the reaction UDP-N-acetyl-alpha-D-muramate + L-alanine + ATP = UDP-N-acetyl-alpha-D-muramoyl-L-alanine + ADP + phosphate + H(+). It participates in cell wall biogenesis; peptidoglycan biosynthesis. In terms of biological role, cell wall formation. This chain is UDP-N-acetylmuramate--L-alanine ligase, found in Aliivibrio salmonicida (strain LFI1238) (Vibrio salmonicida (strain LFI1238)).